A 207-amino-acid chain; its full sequence is Urease accessory protein UreG (207 aa).

14–21 (GPVGSGKT) contributes to the GTP binding site.

It belongs to the SIMIBI class G3E GTPase family. UreG subfamily. In terms of assembly, homodimer. UreD, UreF and UreG form a complex that acts as a GTP-hydrolysis-dependent molecular chaperone, activating the urease apoprotein by helping to assemble the nickel containing metallocenter of UreC. The UreE protein probably delivers the nickel.

The protein resides in the cytoplasm. In terms of biological role, facilitates the functional incorporation of the urease nickel metallocenter. This process requires GTP hydrolysis, probably effectuated by UreG. This is Urease accessory protein UreG from Pseudomonas putida (strain GB-1).